A 461-amino-acid polypeptide reads, in one-letter code: MSVRIEHDTFGEIEVPEDKYWGAQTERSKRNFPVGKEHMPIQVIYGFAQLKRGAALANHELGKLSDEKKNAIVYACDRILNGELDNHFPLVIWQTGSGTQSNMNVNEVVSYVANEYLKKHGSKETIHPNDDVNKSQSSNDTFPTAMHVALFHEVETKLEPALNHLRQTFKEKEDQYQSIIKIGRTHLQDATPIKLGQEISGWRYMLEKCEQLLSESKKHILNLAIGGTAVGTGINAHPEFGHKVAKYISQNTGYAFVSSENKFHALTSHDEIVQLHGTLKALATDLMKIANDIRWLASGPRAGLAEISIPENEPGSSIMPGKVNPTQCEMLTMVAVQVMGNDTTVGIASSQGNFELNVFKPVIMHNTLQSIYLLADGMNTFNKNCAIGIQPIEENINNYLNQSLMLVTALNPHIGYEKAAQIAKKAHKEGLTLKESAIESGYVTESQFEEWIKPEDMVDPH.

Residues Ser97 to Thr99, His127 to Asp130, Ser137 to Asn139, and Thr185 contribute to the substrate site. The active-site Proton donor/acceptor is the His186. Residue Ser316 is part of the active site. Substrate is bound by residues Ser317 and Lys322 to Asn324.

It belongs to the class-II fumarase/aspartase family. Fumarase subfamily. Homotetramer.

The protein localises to the cytoplasm. It catalyses the reaction (S)-malate = fumarate + H2O. Its pathway is carbohydrate metabolism; tricarboxylic acid cycle; (S)-malate from fumarate: step 1/1. Involved in the TCA cycle. Catalyzes the stereospecific interconversion of fumarate to L-malate. This Staphylococcus epidermidis (strain ATCC 35984 / DSM 28319 / BCRC 17069 / CCUG 31568 / BM 3577 / RP62A) protein is Fumarate hydratase class II.